The following is a 341-amino-acid chain: 4-hydroxy-2-oxovalerate aldolase (341 aa).

A Pyruvate carboxyltransferase domain is found at 9-260; sequence VVITDSTLRD…ATGIDLYRVL (252 aa). 17–18 provides a ligand contact to substrate; that stretch reads RD. A Mn(2+)-binding site is contributed by D18. H21 functions as the Proton acceptor in the catalytic mechanism. Residues S172 and H199 each contribute to the substrate site. Residues H199 and H201 each coordinate Mn(2+).

Belongs to the 4-hydroxy-2-oxovalerate aldolase family.

The enzyme catalyses (S)-4-hydroxy-2-oxopentanoate = acetaldehyde + pyruvate. This Spirochaeta aurantia protein is 4-hydroxy-2-oxovalerate aldolase.